Reading from the N-terminus, the 249-residue chain is 1-(5-phosphoribosyl)-5-[(5-phosphoribosylamino)methylideneamino] imidazole-4-carboxamide isomerase (249 aa).

The Proton acceptor role is filled by D10. D131 functions as the Proton donor in the catalytic mechanism.

This sequence belongs to the HisA/HisF family.

It localises to the cytoplasm. The enzyme catalyses 1-(5-phospho-beta-D-ribosyl)-5-[(5-phospho-beta-D-ribosylamino)methylideneamino]imidazole-4-carboxamide = 5-[(5-phospho-1-deoxy-D-ribulos-1-ylimino)methylamino]-1-(5-phospho-beta-D-ribosyl)imidazole-4-carboxamide. It participates in amino-acid biosynthesis; L-histidine biosynthesis; L-histidine from 5-phospho-alpha-D-ribose 1-diphosphate: step 4/9. The chain is 1-(5-phosphoribosyl)-5-[(5-phosphoribosylamino)methylideneamino] imidazole-4-carboxamide isomerase from Brevibacillus brevis (strain 47 / JCM 6285 / NBRC 100599).